Here is a 273-residue protein sequence, read N- to C-terminus: 2,3,4,5-tetrahydropyridine-2,6-dicarboxylate N-succinyltransferase (273 aa).

Belongs to the transferase hexapeptide repeat family.

The protein resides in the cytoplasm. The enzyme catalyses (S)-2,3,4,5-tetrahydrodipicolinate + succinyl-CoA + H2O = (S)-2-succinylamino-6-oxoheptanedioate + CoA. It functions in the pathway amino-acid biosynthesis; L-lysine biosynthesis via DAP pathway; LL-2,6-diaminopimelate from (S)-tetrahydrodipicolinate (succinylase route): step 1/3. The sequence is that of 2,3,4,5-tetrahydropyridine-2,6-dicarboxylate N-succinyltransferase from Bordetella petrii (strain ATCC BAA-461 / DSM 12804 / CCUG 43448).